The sequence spans 602 residues: Elongation factor 4 (602 aa).

One can recognise a tr-type G domain in the interval Ser-7–Thr-196. Residues Asp-19–Thr-24 and Asn-136–Asp-139 contribute to the GTP site.

This sequence belongs to the TRAFAC class translation factor GTPase superfamily. Classic translation factor GTPase family. LepA subfamily.

The protein resides in the cell inner membrane. It catalyses the reaction GTP + H2O = GDP + phosphate + H(+). Required for accurate and efficient protein synthesis under certain stress conditions. May act as a fidelity factor of the translation reaction, by catalyzing a one-codon backward translocation of tRNAs on improperly translocated ribosomes. Back-translocation proceeds from a post-translocation (POST) complex to a pre-translocation (PRE) complex, thus giving elongation factor G a second chance to translocate the tRNAs correctly. Binds to ribosomes in a GTP-dependent manner. This chain is Elongation factor 4, found in Prochlorococcus marinus (strain MIT 9515).